A 243-amino-acid chain; its full sequence is 2-C-methyl-D-erythritol 4-phosphate cytidylyltransferase (243 aa).

This sequence belongs to the IspD/TarI cytidylyltransferase family. IspD subfamily.

The catalysed reaction is 2-C-methyl-D-erythritol 4-phosphate + CTP + H(+) = 4-CDP-2-C-methyl-D-erythritol + diphosphate. Its pathway is isoprenoid biosynthesis; isopentenyl diphosphate biosynthesis via DXP pathway; isopentenyl diphosphate from 1-deoxy-D-xylulose 5-phosphate: step 2/6. Its function is as follows. Catalyzes the formation of 4-diphosphocytidyl-2-C-methyl-D-erythritol from CTP and 2-C-methyl-D-erythritol 4-phosphate (MEP). The polypeptide is 2-C-methyl-D-erythritol 4-phosphate cytidylyltransferase (Chlorobium phaeovibrioides (strain DSM 265 / 1930) (Prosthecochloris vibrioformis (strain DSM 265))).